The sequence spans 609 residues: MFPERLDAPQAYDIAKAMMDGFNRHYRLFRAESARAKHRFETADWHGQQRAQRERIEFYDLRVRECVRRLDKEFNAGALPMDVWHQIKLHYIGLMVNHLQPELAETFFNSVTTKILHRTHFHNDFIFVRPAVSTEYIESDDPGARPTYRAYYPSRDNLHETVVRIVEHCALQRDFENLPRDAGHVVQALQQRLGAVKLRTNFQVQVLSSLFFRNKGAYLVGKVINGYNELPFALPILHGEDGRLLIDAVLFGENDLQMLFSFARAYFMVDMEIPSAYVQFLRSLMPRKPRAELYTALGLAKQGKTLFYRDFLHHLRYSTDKFRIAPGIKGMVMLVFDLPSFPYVFKLIKDQFPAPKDTTREQVQGKYLLVKQHDRVGRMADTLEYSLVAFPRERFSDELIEEIRRHAPSQIEISDRDGDGRQEVIIAHLYIERRMIPLNIHLQECFDTGLDKPEARSALEHAVTEYGNAIKDMVAANIFPGDMLWKNFGITRNGKVVFYDYDEIEYLTDCNFRRVPPPRCEEDEVSGEVWWPVGPHDVFPETFGPFLLGNDSVREAFMRHHADLLDVEFWQSHKERIQAGHLYDVFPYDSARRFRCASPSSFQTQGDST.

Residues 325-331 and lysine 346 each bind ATP; that span reads APGIKGM. Residue aspartate 381 is part of the active site.

It belongs to the AceK family.

It localises to the cytoplasm. It catalyses the reaction L-seryl-[isocitrate dehydrogenase] + ATP = O-phospho-L-seryl-[isocitrate dehydrogenase] + ADP + H(+). Its function is as follows. Bifunctional enzyme which can phosphorylate or dephosphorylate isocitrate dehydrogenase (IDH) on a specific serine residue. This is a regulatory mechanism which enables bacteria to bypass the Krebs cycle via the glyoxylate shunt in response to the source of carbon. When bacteria are grown on glucose, IDH is fully active and unphosphorylated, but when grown on acetate or ethanol, the activity of IDH declines drastically concomitant with its phosphorylation. The protein is Isocitrate dehydrogenase kinase/phosphatase of Acidovorax sp. (strain JS42).